Reading from the N-terminus, the 701-residue chain is Polyribonucleotide nucleotidyltransferase (701 aa).

Mg(2+)-binding residues include D487 and D493. A KH domain is found at P554–V613. The 69-residue stretch at G623–K691 folds into the S1 motif domain.

It belongs to the polyribonucleotide nucleotidyltransferase family. Component of the RNA degradosome, which is a multiprotein complex involved in RNA processing and mRNA degradation. It depends on Mg(2+) as a cofactor.

Its subcellular location is the cytoplasm. It carries out the reaction RNA(n+1) + phosphate = RNA(n) + a ribonucleoside 5'-diphosphate. Functionally, involved in mRNA degradation. Catalyzes the phosphorolysis of single-stranded polyribonucleotides processively in the 3'- to 5'-direction. The protein is Polyribonucleotide nucleotidyltransferase of Pseudomonas savastanoi pv. phaseolicola (strain 1448A / Race 6) (Pseudomonas syringae pv. phaseolicola (strain 1448A / Race 6)).